Consider the following 178-residue polypeptide: Large ribosomal subunit protein uL6 (178 aa).

Belongs to the universal ribosomal protein uL6 family. In terms of assembly, part of the 50S ribosomal subunit.

Its function is as follows. This protein binds to the 23S rRNA, and is important in its secondary structure. It is located near the subunit interface in the base of the L7/L12 stalk, and near the tRNA binding site of the peptidyltransferase center. The polypeptide is Large ribosomal subunit protein uL6 (Corynebacterium diphtheriae (strain ATCC 700971 / NCTC 13129 / Biotype gravis)).